The sequence spans 78 residues: Acyl carrier protein AcpP (78 aa).

The Carrier domain occupies 2–77 (SDTAERVKKI…DAVKYIDKAS (76 aa)). Residue Ser-37 is modified to O-(pantetheine 4'-phosphoryl)serine.

This sequence belongs to the acyl carrier protein (ACP) family. In terms of processing, 4'-phosphopantetheine is transferred from CoA to a specific serine of apo-ACP by AcpS. This modification is essential for activity because fatty acids are bound in thioester linkage to the sulfhydryl of the prosthetic group.

It localises to the cytoplasm. It participates in lipid metabolism; fatty acid biosynthesis. Its function is as follows. Carrier of the growing fatty acid chain in fatty acid biosynthesis. The protein is Acyl carrier protein AcpP of Mesorhizobium japonicum (strain LMG 29417 / CECT 9101 / MAFF 303099) (Mesorhizobium loti (strain MAFF 303099)).